We begin with the raw amino-acid sequence, 159 residues long: Elicitor-responsive protein 1 (159 aa).

One can recognise a C2 domain in the interval 1–112 (MAGSGVLEVH…SLGMEHGTWE (112 aa)). D21 and D30 together coordinate Ca(2+). S44 is modified (phosphoserine; by CPK). Ca(2+) is bound by residues D81, D83, S86, and D89.

Requires Ca(2+) as cofactor. Phosphorylated at Ser-44 by CPK18 in a calcium-dependent manner. As to expression, isoform 2 is expressed in young vascular tissues and tiller buds.

The protein resides in the cytoplasm. The protein localises to the cell membrane. Its function is as follows. May play a role in plant defense signaling. Isoform 2 binds to phospholipids in a Ca(2+)-dependent manner in response to pathogen elicitors. The polypeptide is Elicitor-responsive protein 1 (ERG1) (Oryza sativa subsp. japonica (Rice)).